The sequence spans 86 residues: Small ribosomal subunit protein bS16 (86 aa).

The protein belongs to the bacterial ribosomal protein bS16 family.

The sequence is that of Small ribosomal subunit protein bS16 from Bordetella bronchiseptica (strain ATCC BAA-588 / NCTC 13252 / RB50) (Alcaligenes bronchisepticus).